The sequence spans 162 residues: Zinc finger protein ZAT12 (162 aa).

2 C2H2-type zinc fingers span residues 39 to 61 (FTCKTCLKQFHSFQALGGHRASH) and 82 to 104 (HPCPICGVEFPMGQALGGHMRRH).

In terms of tissue distribution, expressed in roots, stems and flowers.

It is found in the nucleus. In terms of biological role, transcriptional repressor involved in light acclimation, cold and oxidative stress responses. May regulate a collection of transcripts involved in response to high-light, cold and oxidative stress. This Arabidopsis thaliana (Mouse-ear cress) protein is Zinc finger protein ZAT12 (ZAT12).